Reading from the N-terminus, the 484-residue chain is Zinc metalloproteinase homolog-disintegrin albolatin (484 aa).

The N-terminal stretch at 1 to 20 is a signal peptide; it reads MIQVLLVTICLAVFPYQGSS. Positions 21 to 191 are excised as a propeptide; it reads IILESGNVND…KTSQLNLPLL (171 aa). 3 N-linked (GlcNAc...) asparagine glycosylation sites follow: Asn80, Asn251, and Asn301. Positions 194-392 constitute a Peptidase M12B domain; it reads RCIELVMVAD…WTSYCLYNEP (199 aa). 10 disulfide bridges follow: Cys305/Cys387, Cys345/Cys369, Cys347/Cys352, Cys403/Cys422, Cys414/Cys432, Cys416/Cys427, Cys426/Cys449, Cys440/Cys446, Cys445/Cys470, and Cys458/Cys477. Residues 400–484 form the Disintegrin domain; that stretch reads PPVCGNYYLE…GDCPWIGYYG (85 aa). A Cell attachment site; atypical (KGD) motif is present at residues 462–464; sequence KGD.

This sequence belongs to the venom metalloproteinase (M12B) family. P-II subfamily. P-IIb sub-subfamily. In terms of assembly, homodimer; disulfide-linked (disintegrin). Expressed by the venom gland.

It localises to the secreted. The function of this complete protein has not been studied, but it may be similar to the function of the disintegrin domain. A recombinant protein of this domain (409-484) inhibits collagen-induced human platelet aggregation, without having effect on ADP-induced aggregation. It may act either by blocking the binding of fibrinogen to the platelet receptor GPIIb/GPIIIa (ITGA2B/ITGB3) or by blocking the binding of collagen to the integrin alpha-2/beta-1 complex (ITGA2/ITGB1). The chain is Zinc metalloproteinase homolog-disintegrin albolatin from Trimeresurus albolabris (White-lipped pit viper).